Reading from the N-terminus, the 203-residue chain is MKAKLVSLLAQANIKISDQQIQQLIDLVNLLNKWNKAYNLTSVRDPQEMLVKHILDSLVVSPYLQGDRFIDVGTGPGLPGLPLAIINPSKQFVLLDSLGKRISFIRNAIRELRLTNATPVLSRVEEYQPEDKFDGVLSRAFASLKDMTDWCYHLPKENGYFYALKGIYQEDEINELNKKYTIQKVIELSVPELIGERHLIVLR.

S-adenosyl-L-methionine contacts are provided by residues G73, L78, 124 to 125 (VE), and R139.

The protein belongs to the methyltransferase superfamily. RNA methyltransferase RsmG family.

It is found in the cytoplasm. The enzyme catalyses guanosine(527) in 16S rRNA + S-adenosyl-L-methionine = N(7)-methylguanosine(527) in 16S rRNA + S-adenosyl-L-homocysteine. Its function is as follows. Specifically methylates the N7 position of guanine in position 527 of 16S rRNA. The sequence is that of Ribosomal RNA small subunit methyltransferase G from Haemophilus influenzae (strain PittEE).